A 213-amino-acid chain; its full sequence is Receptor-binding cancer antigen expressed on SiSo cells (213 aa).

The Extracellular portion of the chain corresponds to 1 to 6; sequence MAITQF. A helical; Signal-anchor for type III membrane protein membrane pass occupies residues 7 to 27; the sequence is RLFKVCTCLATVLSFLKRLIC. Residues 28–213 lie on the Cytoplasmic side of the membrane; that stretch reads RSGRGRKLSG…EQNKMGVKLS (186 aa). The residue at position 36 (serine 36) is a Phosphoserine. Threonine 41 is subject to Phosphothreonine. Tyrosine 94 is modified (phosphotyrosine). Residues 168-209 are a coiled coil; the sequence is QAEEVLRQQKIADREKRAAEQQRKKMEKEAQRLLKKEQNKMG. Residues 179-206 show a composition bias toward basic and acidic residues; it reads ADREKRAAEQQRKKMEKEAQRLLKKEQN. A disordered region spans residues 179–213; sequence ADREKRAAEQQRKKMEKEAQRLLKKEQNKMGVKLS.

In terms of assembly, homodimer.

Its subcellular location is the golgi apparatus membrane. Functionally, may participate in suppression of cell proliferation and induces apoptotic cell death through activation of interleukin-1-beta converting enzyme (ICE)-like proteases. The protein is Receptor-binding cancer antigen expressed on SiSo cells (Ebag9) of Rattus norvegicus (Rat).